We begin with the raw amino-acid sequence, 234 residues long: Meiotically up-regulated gene 35 protein (234 aa).

Residues 126–156 show a composition bias toward basic and acidic residues; it reads DSSGDLTSTDKERDVSPVSHSEKPYWDRYDL. The tract at residues 126–176 is disordered; it reads DSSGDLTSTDKERDVSPVSHSEKPYWDRYDLDQPSNQDVEESRNLVQEPKH. Serine 127 and serine 128 each carry phosphoserine. Residue threonine 132 is modified to Phosphothreonine. Serine 141 is subject to Phosphoserine.

Its subcellular location is the cytoplasm. Has a role in meiosis. The protein is Meiotically up-regulated gene 35 protein (mug35) of Schizosaccharomyces pombe (strain 972 / ATCC 24843) (Fission yeast).